We begin with the raw amino-acid sequence, 143 residues long: Mediator of RNA polymerase II transcription subunit 10 (143 aa).

The tract at residues 123–143 (GAHSNTEISTNPGQKRQGNVS) is disordered. Residues 124–143 (AHSNTEISTNPGQKRQGNVS) show a composition bias toward polar residues.

This sequence belongs to the Mediator complex subunit 10 family. Component of the Mediator complex.

It localises to the nucleus. Functionally, component of the Mediator complex, a coactivator involved in the regulated transcription of nearly all RNA polymerase II-dependent genes. Mediator functions as a bridge to convey information from gene-specific regulatory proteins to the basal RNA polymerase II transcription machinery. Mediator is recruited to promoters by direct interactions with regulatory proteins and serves as a scaffold for the assembly of a functional preinitiation complex with RNA polymerase II and the general transcription factors. This chain is Mediator of RNA polymerase II transcription subunit 10 (NUT2), found in Yarrowia lipolytica (strain CLIB 122 / E 150) (Yeast).